A 295-amino-acid chain; its full sequence is MNDSRYIGRFAPTPSGFLHFGSLVAALASWLDARAVNGRWLLRVEDTDPPREMPGARDAILQTLERYGLEWDGEVVFQSQRHPAYAQVVDRMFNMGLAYACTCSRKQLEGYNGIYPGFCRNAGHAREGAAIRLRVPELIYRFTDRVQGTFQQHLGREVGDFVIQRRDGLYAYQLAVVLDDAWQGVTDIVRGADLLDNTPRQLYLQELLGFSQPRYLHIPLIVQPDGHKLGKSYRSPPLEASQATPLLLRALRALGQEADPQLLTATPAEVLAVARQRWQPEAIAQRTTVPEADLY.

Residues 9–13 (RFAPT) and E45 contribute to the L-glutamate site. A 'HIGH' region motif is present at residues 12–22 (PTPSGFLHFGS). Zn(2+)-binding residues include C101, C103, Y115, and C119. Positions 172 and 190 each coordinate L-glutamate. Residues 228 to 232 (KLGKS) carry the 'KMSKS' region motif. K231 is an ATP binding site.

It belongs to the class-I aminoacyl-tRNA synthetase family. GluQ subfamily. The cofactor is Zn(2+).

Its function is as follows. Catalyzes the tRNA-independent activation of glutamate in presence of ATP and the subsequent transfer of glutamate onto a tRNA(Asp). Glutamate is transferred on the 2-amino-5-(4,5-dihydroxy-2-cyclopenten-1-yl) moiety of the queuosine in the wobble position of the QUC anticodon. In Pseudomonas putida (strain W619), this protein is Glutamyl-Q tRNA(Asp) synthetase.